The following is a 468-amino-acid chain: Ribulose bisphosphate carboxylase large chain (468 aa).

Position 5 is an N6,N6,N6-trimethyllysine (Lys5). Substrate-binding residues include Asn114 and Thr164. Lys166 functions as the Proton acceptor in the catalytic mechanism. Lys168 contacts substrate. 3 residues coordinate Mg(2+): Lys192, Asp194, and Glu195. Lys192 carries the N6-carboxylysine modification. The Proton acceptor role is filled by His285. Residues Arg286, His318, and Ser370 each coordinate substrate.

This sequence belongs to the RuBisCO large chain family. Type I subfamily. As to quaternary structure, heterohexadecamer of 8 large chains and 8 small chains; disulfide-linked. The disulfide link is formed within the large subunit homodimers. Requires Mg(2+) as cofactor. Post-translationally, the disulfide bond which can form in the large chain dimeric partners within the hexadecamer appears to be associated with oxidative stress and protein turnover.

It is found in the plastid. It localises to the chloroplast. The enzyme catalyses 2 (2R)-3-phosphoglycerate + 2 H(+) = D-ribulose 1,5-bisphosphate + CO2 + H2O. It carries out the reaction D-ribulose 1,5-bisphosphate + O2 = 2-phosphoglycolate + (2R)-3-phosphoglycerate + 2 H(+). Its function is as follows. RuBisCO catalyzes two reactions: the carboxylation of D-ribulose 1,5-bisphosphate, the primary event in carbon dioxide fixation, as well as the oxidative fragmentation of the pentose substrate in the photorespiration process. Both reactions occur simultaneously and in competition at the same active site. The protein is Ribulose bisphosphate carboxylase large chain of Salvia divinorum (Maria pastora).